Reading from the N-terminus, the 326-residue chain is 4-hydroxythreonine-4-phosphate dehydrogenase (326 aa).

H134 and T135 together coordinate substrate. A divalent metal cation contacts are provided by H164, H209, and H264. Residues K272, N281, and R290 each coordinate substrate.

Belongs to the PdxA family. As to quaternary structure, homodimer. Requires Zn(2+) as cofactor. It depends on Mg(2+) as a cofactor. Co(2+) serves as cofactor.

Its subcellular location is the cytoplasm. The catalysed reaction is 4-(phosphooxy)-L-threonine + NAD(+) = 3-amino-2-oxopropyl phosphate + CO2 + NADH. The protein operates within cofactor biosynthesis; pyridoxine 5'-phosphate biosynthesis; pyridoxine 5'-phosphate from D-erythrose 4-phosphate: step 4/5. Its function is as follows. Catalyzes the NAD(P)-dependent oxidation of 4-(phosphooxy)-L-threonine (HTP) into 2-amino-3-oxo-4-(phosphooxy)butyric acid which spontaneously decarboxylates to form 3-amino-2-oxopropyl phosphate (AHAP). The protein is 4-hydroxythreonine-4-phosphate dehydrogenase of Colwellia psychrerythraea (strain 34H / ATCC BAA-681) (Vibrio psychroerythus).